A 211-amino-acid chain; its full sequence is Thymidylate kinase (211 aa).

An ATP-binding site is contributed by 7 to 14; the sequence is GIDGCGKT.

It belongs to the thymidylate kinase family.

It catalyses the reaction dTMP + ATP = dTDP + ADP. In terms of biological role, phosphorylation of dTMP to form dTDP in both de novo and salvage pathways of dTTP synthesis. The protein is Thymidylate kinase of Anaplasma marginale (strain St. Maries).